The sequence spans 554 residues: Probable phospholipase D F09G2.8 (554 aa).

Topologically, residues 1-123 are cytoplasmic; that stretch reads MPLRLINFRQ…GNSRNRIIKP (123 aa). The chain crosses the membrane as a helical; Signal-anchor for type II membrane protein span at residues 124-144; sequence ACVPISIVSLFIIALVFLPLF. Topologically, residues 145–554 are extracellular; the sequence is NEEDLASPIK…DWNSEYSKDL (410 aa). N-linked (GlcNAc...) asparagine glycans are attached at residues Asn-181, Asn-208, Asn-244, and Asn-266. The region spanning 272 to 299 is the PLD phosphodiesterase 1 domain; the sequence is GSGIIHTKFILSDIATLYIGSANMDWKS. Active-site residues include His-277, Lys-279, and Asp-284. N-linked (GlcNAc...) asparagine glycosylation is found at Asn-333, Asn-350, Asn-468, and Asn-513. The region spanning 492–518 is the PLD phosphodiesterase 2 domain; the sequence is FTRVNHAKYMVTEDIAYIGTSNWSGDY.

This sequence belongs to the phospholipase D family.

Its subcellular location is the membrane. The catalysed reaction is a 1,2-diacyl-sn-glycero-3-phosphocholine + H2O = a 1,2-diacyl-sn-glycero-3-phosphate + choline + H(+). The polypeptide is Probable phospholipase D F09G2.8 (Caenorhabditis elegans).